The chain runs to 425 residues: Glycosyl hydrolase family 109 protein 2 (425 aa).

NAD(+) is bound by residues 29-30, glutamate 51, 99-102, 119-120, and asparagine 148; these read NR, WLTH, and EV. Tyrosine 177 serves as a coordination point for substrate. NAD(+)-binding positions include 194–198 and tyrosine 211; that span reads FHNHW. Substrate contacts are provided by residues 211–214 and tyrosine 293; that span reads YPTH.

It belongs to the Gfo/Idh/MocA family. Glycosyl hydrolase 109 subfamily. NAD(+) is required as a cofactor.

Glycosidase. This Bacteroides fragilis (strain YCH46) protein is Glycosyl hydrolase family 109 protein 2.